The following is a 147-amino-acid chain: Alpha-amylase/trypsin inhibitor (147 aa).

Positions 1-21 (MASDHRRFVLSGAVLLSVLAV) are cleaved as a signal peptide.

Belongs to the protease inhibitor I6 (cereal trypsin/alpha-amylase inhibitor) family. In terms of processing, five disulfide bonds, which are essential for the inhibitor activity, are probably present. In terms of tissue distribution, endosperm.

Its subcellular location is the secreted. In terms of biological role, alpha-amylase/trypsin inhibitor. This Hordeum vulgare (Barley) protein is Alpha-amylase/trypsin inhibitor.